Consider the following 717-residue polypeptide: Acetone carboxylase beta subunit (717 aa).

As to quaternary structure, heterohexamer of two alpha, two beta and two gamma subunits. It depends on Fe cation as a cofactor. The cofactor is Mg(2+). Requires Zn(2+) as cofactor. The N-terminus is blocked.

It catalyses the reaction acetone + hydrogencarbonate + 2 ATP + 3 H2O = acetoacetate + 2 AMP + 4 phosphate + 4 H(+). Functionally, catalyzes the carboxylation of acetone to form acetoacetate. Has a reduced activity on butanone, and no activity on 2-pentatone, 3-pentatone, 2-hexanone, chloroacetone, pyruvate, phosphoenolpyruvate, acetaldehyde, propionaldehyde and propylene oxide. In Xanthobacter autotrophicus (strain ATCC BAA-1158 / Py2), this protein is Acetone carboxylase beta subunit.